Here is a 594-residue protein sequence, read N- to C-terminus: DNA ligase (594 aa).

Residues 32 to 36 (DEEYD), 81 to 82 (SL), and Glu118 each bind NAD(+). Lys120 serves as the catalytic N6-AMP-lysine intermediate. NAD(+) contacts are provided by Arg141, Glu181, Lys299, and Lys323. Zn(2+) contacts are provided by Cys417, Cys420, Cys436, and Cys442.

This sequence belongs to the NAD-dependent DNA ligase family. LigA subfamily. Mg(2+) serves as cofactor. The cofactor is Mn(2+).

It catalyses the reaction NAD(+) + (deoxyribonucleotide)n-3'-hydroxyl + 5'-phospho-(deoxyribonucleotide)m = (deoxyribonucleotide)n+m + AMP + beta-nicotinamide D-nucleotide.. Its function is as follows. DNA ligase that catalyzes the formation of phosphodiester linkages between 5'-phosphoryl and 3'-hydroxyl groups in double-stranded DNA using NAD as a coenzyme and as the energy source for the reaction. It is essential for DNA replication and repair of damaged DNA. This is DNA ligase from Blochmanniella floridana.